Here is a 331-residue protein sequence, read N- to C-terminus: UPF0194 membrane protein YbhG (331 aa).

The first 19 residues, M1–A19, serve as a signal peptide directing secretion. Residues E107–A208 adopt a coiled-coil conformation.

The protein belongs to the UPF0194 family.

The protein localises to the periplasm. This chain is UPF0194 membrane protein YbhG, found in Salmonella heidelberg (strain SL476).